The chain runs to 144 residues: MRAVVVLLLVAVASAKVYDRCELARALKASGMDGYAGNSLPNWVCLSKWESSYNTQATNRNTDGSTDYGIFQINSRYWCDDGRTPGAKNVCGIRCSQLLTADLTVAIRCAKRVVLDPNGIGAWVAWRLHCQNQDLRSYVAGCGV.

The first 15 residues, 1–15, serve as a signal peptide directing secretion; sequence MRAVVVLLLVAVASA. A C-type lysozyme domain is found at 16-144; the sequence is KVYDRCELAR…LRSYVAGCGV (129 aa). Disulfide bonds link Cys21–Cys142, Cys45–Cys130, Cys79–Cys95, and Cys91–Cys109. Catalysis depends on residues Glu50 and Asp67.

The protein resides in the secreted. It catalyses the reaction Hydrolysis of (1-&gt;4)-beta-linkages between N-acetylmuramic acid and N-acetyl-D-glucosamine residues in a peptidoglycan and between N-acetyl-D-glucosamine residues in chitodextrins.. Its function is as follows. Lysozymes have primarily a bacteriolytic function; those in tissues and body fluids are associated with the monocyte-macrophage system and enhance the activity of immunoagents. Has antibacterial activity against the Gram positive bacterium P.citreus. Has no antibacterial activity against the Gram negative bacteria E.coli and Y.ruckeri. Does not have hemolytic activity against trout erythrocytes. The polypeptide is Lysozyme C II (Oncorhynchus mykiss (Rainbow trout)).